We begin with the raw amino-acid sequence, 847 residues long: DNA gyrase subunit A (847 aa).

The region spanning 34–533 (LPDVRDGLKP…NYSDINTSDL (500 aa)) is the Topo IIA-type catalytic domain. Tyr122 serves as the catalytic O-(5'-phospho-DNA)-tyrosine intermediate. Positions 560–566 (QKRGGKG) match the GyrA-box motif.

This sequence belongs to the type II topoisomerase GyrA/ParC subunit family. In terms of assembly, heterotetramer, composed of two GyrA and two GyrB chains. In the heterotetramer, GyrA contains the active site tyrosine that forms a transient covalent intermediate with DNA, while GyrB binds cofactors and catalyzes ATP hydrolysis.

The protein resides in the cytoplasm. The catalysed reaction is ATP-dependent breakage, passage and rejoining of double-stranded DNA.. Functionally, a type II topoisomerase that negatively supercoils closed circular double-stranded (ds) DNA in an ATP-dependent manner to modulate DNA topology and maintain chromosomes in an underwound state. Negative supercoiling favors strand separation, and DNA replication, transcription, recombination and repair, all of which involve strand separation. Also able to catalyze the interconversion of other topological isomers of dsDNA rings, including catenanes and knotted rings. Type II topoisomerases break and join 2 DNA strands simultaneously in an ATP-dependent manner. The polypeptide is DNA gyrase subunit A (Buchnera aphidicola subsp. Baizongia pistaciae (strain Bp)).